Reading from the N-terminus, the 321-residue chain is MSMQDTFSSPEHFTVLLREAVGGLALKENGIYIDGTFGRGGHSRFILSQLSKKGQLIAIDRDPQAIQVAQNIQDPRFRIVHDSFSAIPDICEKLGLTGKIDGILLDLGVSSPQLDNAERGFSFMKDGPLDMRMDTTQGLSATEWLRQVSEQDLAWVLKTFGEERFAKRIAQAIVGYNKSAVQSGAEPLNRTLQLAELIAQSVPFKDKYKHPATRSFQAIRIFINSELDELEKVLNGALNVLAPQGRLSIISFHSLEDRMVKHFIRKQSKGDDLPKGLPLREEQIQHNQKLKPVGKAIMPTEQEMAANVRSRSAVLRIAERI.

S-adenosyl-L-methionine-binding positions include 40–42, Asp60, Phe84, Asp106, and Gln113; that span reads GGH.

The protein belongs to the methyltransferase superfamily. RsmH family.

Its subcellular location is the cytoplasm. It catalyses the reaction cytidine(1402) in 16S rRNA + S-adenosyl-L-methionine = N(4)-methylcytidine(1402) in 16S rRNA + S-adenosyl-L-homocysteine + H(+). Specifically methylates the N4 position of cytidine in position 1402 (C1402) of 16S rRNA. This chain is Ribosomal RNA small subunit methyltransferase H, found in Histophilus somni (strain 2336) (Haemophilus somnus).